Here is a 323-residue protein sequence, read N- to C-terminus: Calcium homeostasis modulator protein 2 (323 aa).

Over methionine 1 to valine 21 the chain is Cytoplasmic. Residues leucine 14–phenylalanine 39 are central pore. The helical transmembrane segment at methionine 22 to alanine 43 threads the bilayer. Over phenylalanine 44–arginine 52 the chain is Extracellular. 2 disulfide bridges follow: cysteine 46–cysteine 130 and cysteine 48–cysteine 162. The chain crosses the membrane as a helical span at residues asparagine 53–asparagine 76. Residues asparagine 77–leucine 101 are Cytoplasmic-facing. The chain crosses the membrane as a helical span at residues leucine 102–leucine 132. Over serine 133 to arginine 179 the chain is Extracellular. The interval glutamate 145–histidine 152 is hemichannel docking. The helical transmembrane segment at leucine 180–lysine 206 threads the bilayer. Over histidine 207–serine 323 the chain is Cytoplasmic. The interval tyrosine 214–phenylalanine 251 is intersubunit interaction.

This sequence belongs to the CALHM family. In terms of assembly, homo-undecamer. Two undecameric hemichannels can assemble in a head-to-head manner to form a gap junction.

It localises to the cell membrane. The catalysed reaction is ATP(in) = ATP(out). Pore-forming subunit of Ca(2+) homeostasis modulator channels. Mediates ATP release from astrocytes and ATP-induced Ca(2+) influx in microglia thus regulating neuronal ATP and Ca(2+) homeostasis, synaptic transmission and neuroinflammatory response. May form intercellular gap junctions. The gating mechanism remains unknown. The chain is Calcium homeostasis modulator protein 2 (CALHM2) from Bos taurus (Bovine).